Consider the following 332-residue polypeptide: Putative ketol-acid reductoisomerase 3 (332 aa).

Residues 1-182 form the KARI N-terminal Rossmann domain; sequence MDKTVLDASL…AIPGGIAVIS (182 aa). The KARI C-terminal knotted domain occupies 183 to 329; the sequence is SFEEEALLDL…KELYKILRRK (147 aa).

The protein belongs to the ketol-acid reductoisomerase family.

It carries out the reaction (2R)-2,3-dihydroxy-3-methylbutanoate + NADP(+) = (2S)-2-acetolactate + NADPH + H(+). The enzyme catalyses (2R,3R)-2,3-dihydroxy-3-methylpentanoate + NADP(+) = (S)-2-ethyl-2-hydroxy-3-oxobutanoate + NADPH + H(+). It functions in the pathway amino-acid biosynthesis; L-isoleucine biosynthesis; L-isoleucine from 2-oxobutanoate: step 2/4. Its pathway is amino-acid biosynthesis; L-valine biosynthesis; L-valine from pyruvate: step 2/4. This Saccharolobus solfataricus (strain ATCC 35092 / DSM 1617 / JCM 11322 / P2) (Sulfolobus solfataricus) protein is Putative ketol-acid reductoisomerase 3 (ilvC3).